Consider the following 179-residue polypeptide: Probable chorismate pyruvate-lyase (179 aa).

Residues arginine 82, leucine 120, and glutamate 165 each contribute to the substrate site.

It belongs to the UbiC family.

The protein resides in the cytoplasm. It catalyses the reaction chorismate = 4-hydroxybenzoate + pyruvate. Its pathway is cofactor biosynthesis; ubiquinone biosynthesis. Removes the pyruvyl group from chorismate, with concomitant aromatization of the ring, to provide 4-hydroxybenzoate (4HB) for the ubiquinone pathway. The polypeptide is Probable chorismate pyruvate-lyase (Vibrio vulnificus (strain YJ016)).